Here is a 160-residue protein sequence, read N- to C-terminus: Protein Vago (160 aa).

Residues 1–23 form the signal peptide; sequence MESISSMIYLVAMMSLIIGGSQA.

In terms of tissue distribution, expressed in fat body.

Its subcellular location is the secreted. Its function is as follows. Probably involved in the antiviral immune response. May have a role in controlling viral load in the adult fat body, after infection with viruses such as the Drosophila C virus. In Drosophila melanogaster (Fruit fly), this protein is Protein Vago.